The chain runs to 477 residues: Ribulose bisphosphate carboxylase large chain (477 aa).

The propeptide occupies 1-2; that stretch reads MS. Pro-3 carries the post-translational modification N-acetylproline. Lys-14 is modified (N6,N6,N6-trimethyllysine). Substrate is bound by residues Asn-123 and Thr-173. Residue Lys-175 is the Proton acceptor of the active site. A substrate-binding site is contributed by Lys-177. The Mg(2+) site is built by Lys-201, Asp-203, and Glu-204. Lys-201 is subject to N6-carboxylysine. Catalysis depends on His-294, which acts as the Proton acceptor. Positions 295, 327, and 379 each coordinate substrate.

The protein belongs to the RuBisCO large chain family. Type I subfamily. As to quaternary structure, heterohexadecamer of 8 large chains and 8 small chains; disulfide-linked. The disulfide link is formed within the large subunit homodimers. Mg(2+) serves as cofactor. In terms of processing, the disulfide bond which can form in the large chain dimeric partners within the hexadecamer appears to be associated with oxidative stress and protein turnover.

The protein resides in the plastid. The protein localises to the chloroplast. It carries out the reaction 2 (2R)-3-phosphoglycerate + 2 H(+) = D-ribulose 1,5-bisphosphate + CO2 + H2O. The enzyme catalyses D-ribulose 1,5-bisphosphate + O2 = 2-phosphoglycolate + (2R)-3-phosphoglycerate + 2 H(+). In terms of biological role, ruBisCO catalyzes two reactions: the carboxylation of D-ribulose 1,5-bisphosphate, the primary event in carbon dioxide fixation, as well as the oxidative fragmentation of the pentose substrate in the photorespiration process. Both reactions occur simultaneously and in competition at the same active site. This chain is Ribulose bisphosphate carboxylase large chain, found in Nicotiana sylvestris (Wood tobacco).